The following is a 203-amino-acid chain: Probable deoxycytidylate deaminase (203 aa).

Residues 27–163 form the CMP/dCMP-type deaminase domain; it reads HWDDYFMATS…PTYRASKRML (137 aa). Histidine 102 contributes to the Zn(2+) binding site. The active-site Proton donor is the glutamate 104. Zn(2+) is bound by residues cysteine 128 and cysteine 131.

Belongs to the cytidine and deoxycytidylate deaminase family. It depends on Zn(2+) as a cofactor.

It carries out the reaction dCMP + H2O + H(+) = dUMP + NH4(+). In terms of biological role, supplies the nucleotide substrate for thymidylate synthetase. In Drosophila melanogaster (Fruit fly), this protein is Probable deoxycytidylate deaminase.